Reading from the N-terminus, the 335-residue chain is Probable magnesium transporter NIPA1 (335 aa).

Topologically, residues 1 to 7 are extracellular; it reads MDQMSPD. A helical membrane pass occupies residues 8–28; that stretch reads NINGVILAVSSSIFIGSSFII. Residues 29–55 are Cytoplasmic-facing; it reads KKKGLKKAGASGVRAGEGGYGYLKEPW. The chain crosses the membrane as a helical span at residues 56 to 76; sequence WWAGMITMIVGEVANFAAYAF. At 77–79 the chain is on the extracellular side; that stretch reads APA. The chain crosses the membrane as a helical span at residues 80-100; it reads ILVTPLGALSIIFSAVLAHFI. Residues 101–104 are Cytoplasmic-facing; the sequence is LKEK. Residues 105-125 traverse the membrane as a helical segment; the sequence is LHMFGILGCILCVVGSTTIVL. Residues 126-143 lie on the Extracellular side of the membrane; that stretch reads HAPHEQKIESVKQIWQLA. Residues 144 to 164 traverse the membrane as a helical segment; that stretch reads IEPGFLVYSAVIVIVVAILIF. Residues 165–179 are Cytoplasmic-facing; sequence YYEPRYGKTHMIVYV. The chain crosses the membrane as a helical span at residues 180–200; that stretch reads GICSLMGSLTVMSVKAVAIAI. Over 201 to 212 the chain is Extracellular; the sequence is KLTFSGTNQFKY. Residues 213–233 form a helical membrane-spanning segment; that stretch reads FNTWIFILVVATCCILQINYL. The Cytoplasmic portion of the chain corresponds to 234-244; the sequence is NKALDTFNTAV. The helical transmembrane segment at 245–265 threads the bilayer; that stretch reads ISPVYYVMFTTFTIIASMIMF. Residues 266–272 lie on the Extracellular side of the membrane; sequence KDWASQS. A helical transmembrane segment spans residues 273–293; it reads GLKIATELCGFVTILSGTFLL. The Cytoplasmic segment spans residues 294-335; sequence HKTKDMGNSASGRGSISMPTRDTPVFTNSGSGRSSSSDKVAS. The span at 303 to 321 shows a compositional bias: polar residues; sequence ASGRGSISMPTRDTPVFTN. Residues 303 to 335 form a disordered region; it reads ASGRGSISMPTRDTPVFTNSGSGRSSSSDKVAS. A compositionally biased stretch (low complexity) spans 322–335; sequence SGSGRSSSSDKVAS.

It belongs to the NIPA (TC 2.A.7) family. As to quaternary structure, homodimer.

It localises to the cell membrane. The protein resides in the early endosome. Functionally, acts as a Mg(2+) transporter. Can also transport other divalent cations such as Fe(2+), Sr(2+), Ba(2+), Mn(2+) and Co(2+) but to a much less extent than Mg(2+). The protein is Probable magnesium transporter NIPA1 of Arabidopsis thaliana (Mouse-ear cress).